A 168-amino-acid polypeptide reads, in one-letter code: Shikimate kinase (168 aa).

Residue 11–16 participates in ATP binding; that stretch reads GAGKTT. Residue Thr-15 participates in Mg(2+) binding. Substrate is bound by residues Asp-33, Arg-57, and Gly-78. An ATP-binding site is contributed by Arg-118. Arg-136 serves as a coordination point for substrate. Arg-153 lines the ATP pocket.

Belongs to the shikimate kinase family. As to quaternary structure, monomer. Requires Mg(2+) as cofactor.

It localises to the cytoplasm. It carries out the reaction shikimate + ATP = 3-phosphoshikimate + ADP + H(+). It participates in metabolic intermediate biosynthesis; chorismate biosynthesis; chorismate from D-erythrose 4-phosphate and phosphoenolpyruvate: step 5/7. In terms of biological role, catalyzes the specific phosphorylation of the 3-hydroxyl group of shikimic acid using ATP as a cosubstrate. The chain is Shikimate kinase from Enterococcus faecalis (strain ATCC 700802 / V583).